Here is a 418-residue protein sequence, read N- to C-terminus: Gamma-glutamyl phosphate reductase (418 aa).

The protein belongs to the gamma-glutamyl phosphate reductase family.

It localises to the cytoplasm. It carries out the reaction L-glutamate 5-semialdehyde + phosphate + NADP(+) = L-glutamyl 5-phosphate + NADPH + H(+). The protein operates within amino-acid biosynthesis; L-proline biosynthesis; L-glutamate 5-semialdehyde from L-glutamate: step 2/2. Its function is as follows. Catalyzes the NADPH-dependent reduction of L-glutamate 5-phosphate into L-glutamate 5-semialdehyde and phosphate. The product spontaneously undergoes cyclization to form 1-pyrroline-5-carboxylate. The protein is Gamma-glutamyl phosphate reductase of Moorella thermoacetica (strain ATCC 39073 / JCM 9320).